The following is a 336-amino-acid chain: Protein SphX (336 aa).

The N-terminal stretch at 1–27 (MFDLSRLSRGIVPMALLLLGISACTPS) is a signal peptide.

Belongs to the PstS family.

In terms of biological role, may be involved in the system for phosphate transport across the cytoplasmic membrane. This is Protein SphX (sphX) from Synechocystis sp. (strain ATCC 27184 / PCC 6803 / Kazusa).